The primary structure comprises 397 residues: Tryptophan synthase beta chain (397 aa).

Lysine 91 is modified (N6-(pyridoxal phosphate)lysine).

Belongs to the TrpB family. In terms of assembly, tetramer of two alpha and two beta chains. The cofactor is pyridoxal 5'-phosphate.

The enzyme catalyses (1S,2R)-1-C-(indol-3-yl)glycerol 3-phosphate + L-serine = D-glyceraldehyde 3-phosphate + L-tryptophan + H2O. Its pathway is amino-acid biosynthesis; L-tryptophan biosynthesis; L-tryptophan from chorismate: step 5/5. The beta subunit is responsible for the synthesis of L-tryptophan from indole and L-serine. The polypeptide is Tryptophan synthase beta chain (Bacillus thuringiensis (strain Al Hakam)).